Reading from the N-terminus, the 345-residue chain is Trace amine-associated receptor 6 (345 aa).

Over 1 to 32 (MGSNSSPPTVLQLCYENVTGSCVKTPYSPGSR) the chain is Extracellular. Asn17 carries an N-linked (GlcNAc...) asparagine glycan. Disulfide bonds link Cys22/Cys186 and Cys105/Cys190. The chain crosses the membrane as a helical span at residues 33-53 (VILYAVFGFGAVLAVFGNLMV). The Cytoplasmic segment spans residues 54–68 (MISILHFKQLHSPTN). A helical transmembrane segment spans residues 69-89 (FLIASLACADFGVGISVMPFS). At 90 to 107 (MVRSIESCWYFGRSFCTF) the chain is on the extracellular side. Residues 108 to 128 (HTCCDVAFCYSSLFHLSFISI) form a helical membrane-spanning segment. The Cytoplasmic segment spans residues 129–147 (DRYIAVTDPLVYPTKFTVS). A helical transmembrane segment spans residues 148-168 (VSGICIGVSWILPLVYSGAVF). Over 169–202 (YTGVYDDGLEELSSALNCVGGCQVVVNQNWVLID) the chain is Extracellular. The tract at residues 174–187 (DDGLEELSSALNCV) is extracellular Loop 2 (ECL2). Residues 203-223 (FLSFLIPTLVMIILYGNIFLV) traverse the membrane as a helical segment. Residues 224–259 (ARQQAKKIENIGSKTESSSESYKARVARRERKAAKT) lie on the Cytoplasmic side of the membrane. The chain crosses the membrane as a helical span at residues 260 to 276 (LGITVVAFMISWLPYSI). The Extracellular segment spans residues 277–282 (DSLVDA). Residues 283-302 (FMGFITPAYIYEICVWCAYY) traverse the membrane as a helical segment. Residues 303–345 (NSAMNPLIYALFYPWFKKAIKVIMSGQVFKNSSATMNLFSEQI) are Cytoplasmic-facing.

This sequence belongs to the G-protein coupled receptor 1 family. As to expression, specifically expressed in neurons of the olfactory epithelium, to discrete glomeruli predominantly localized to a confined bulb region. Present in a ventral area of the main olfactory epithelium.

It localises to the cell membrane. Its function is as follows. Olfactory receptor specific for trace amines, such as beta-phenylethylamine (beta-PEA). Trace amine compounds are enriched in animal body fluids and act on trace amine-associated receptors (TAARs) to elicit both intraspecific and interspecific innate behaviors. Beta-PEA-binding causes a conformation change that triggers signaling via G(s)-class of G alpha proteins (GNAL or GNAS). The protein is Trace amine-associated receptor 6 of Mus musculus (Mouse).